Reading from the N-terminus, the 223-residue chain is UPF0441 protein ETA_04310 (223 aa).

The disordered stretch occupies residues 166 to 223 (YGAATPGRTMTVPKSALAPKPATTSTVTRGGFGESVAKQNTMQRNSSSTGSANRSMGG). Residues 202–223 (AKQNTMQRNSSSTGSANRSMGG) show a composition bias toward polar residues.

It belongs to the UPF0441 family.

This is UPF0441 protein ETA_04310 from Erwinia tasmaniensis (strain DSM 17950 / CFBP 7177 / CIP 109463 / NCPPB 4357 / Et1/99).